A 306-amino-acid polypeptide reads, in one-letter code: Methionyl-tRNA formyltransferase (306 aa).

108–111 (SLLP) is a (6S)-5,6,7,8-tetrahydrofolate binding site.

It belongs to the Fmt family.

The enzyme catalyses L-methionyl-tRNA(fMet) + (6R)-10-formyltetrahydrofolate = N-formyl-L-methionyl-tRNA(fMet) + (6S)-5,6,7,8-tetrahydrofolate + H(+). Functionally, attaches a formyl group to the free amino group of methionyl-tRNA(fMet). The formyl group appears to play a dual role in the initiator identity of N-formylmethionyl-tRNA by promoting its recognition by IF2 and preventing the misappropriation of this tRNA by the elongation apparatus. This is Methionyl-tRNA formyltransferase from Paenarthrobacter aurescens (strain TC1).